The following is a 151-amino-acid chain: UPF0178 protein YaiI (151 aa).

Belongs to the UPF0178 family.

This chain is UPF0178 protein YaiI, found in Salmonella choleraesuis (strain SC-B67).